The chain runs to 430 residues: Glutamate-1-semialdehyde 2,1-aminomutase 2 (430 aa).

K269 is modified (N6-(pyridoxal phosphate)lysine).

It belongs to the class-III pyridoxal-phosphate-dependent aminotransferase family. HemL subfamily. In terms of assembly, homodimer. Pyridoxal 5'-phosphate serves as cofactor.

It is found in the cytoplasm. The enzyme catalyses (S)-4-amino-5-oxopentanoate = 5-aminolevulinate. The protein operates within porphyrin-containing compound metabolism; protoporphyrin-IX biosynthesis; 5-aminolevulinate from L-glutamyl-tRNA(Glu): step 2/2. This Lysinibacillus sphaericus (strain C3-41) protein is Glutamate-1-semialdehyde 2,1-aminomutase 2.